An 89-amino-acid polypeptide reads, in one-letter code: UPF0213 protein LMOf2365_0181 (89 aa).

The region spanning serine 5–alanine 80 is the GIY-YIG domain.

This sequence belongs to the UPF0213 family.

The sequence is that of UPF0213 protein LMOf2365_0181 from Listeria monocytogenes serotype 4b (strain F2365).